Here is a 326-residue protein sequence, read N- to C-terminus: Malate dehydrogenase (326 aa).

Position 12–18 (12–18 (GGTGQIA)) interacts with NAD(+). 2 residues coordinate substrate: Arg93 and Arg99. Residues Asn106, Gln113, and 130 to 132 (VGN) contribute to the NAD(+) site. The substrate site is built by Asn132 and Arg163. His188 serves as the catalytic Proton acceptor.

It belongs to the LDH/MDH superfamily. MDH type 2 family.

The catalysed reaction is (S)-malate + NAD(+) = oxaloacetate + NADH + H(+). Catalyzes the reversible oxidation of malate to oxaloacetate. The protein is Malate dehydrogenase of Chlamydia trachomatis serovar A (strain ATCC VR-571B / DSM 19440 / HAR-13).